We begin with the raw amino-acid sequence, 264 residues long: Elongation factor Ts (264 aa).

The tract at residues 76 to 79 is involved in Mg(2+) ion dislocation from EF-Tu; it reads TDFV.

The protein belongs to the EF-Ts family.

The protein localises to the cytoplasm. Associates with the EF-Tu.GDP complex and induces the exchange of GDP to GTP. It remains bound to the aminoacyl-tRNA.EF-Tu.GTP complex up to the GTP hydrolysis stage on the ribosome. The sequence is that of Elongation factor Ts from Deinococcus deserti (strain DSM 17065 / CIP 109153 / LMG 22923 / VCD115).